The chain runs to 526 residues: Putative ankyrin repeat protein R840 (526 aa).

ANK repeat units follow at residues Thr78–Ser107, Arg108–Ser137, Lys139–Asp167, Asp169–Ser197, Asn198–Asn227, Ser229–Ile255, Asp256–Ser285, Glu286–Ser315, Tyr317–Asn345, Ile346–Val375, Asp376–Val405, Asn406–Ile435, Asn437–Leu467, Ala468–Ala497, and Asn499–Ser526.

This chain is Putative ankyrin repeat protein R840, found in Acanthamoeba polyphaga (Amoeba).